Reading from the N-terminus, the 37-residue chain is Bactericidin B-2 (37 aa).

Gly-37 is modified (glycine amide).

This sequence belongs to the cecropin family.

The protein resides in the secreted. In terms of biological role, cecropins have lytic and antibacterial activity against several Gram-positive and Gram-negative bacteria. This chain is Bactericidin B-2, found in Manduca sexta (Tobacco hawkmoth).